Here is a 624-residue protein sequence, read N- to C-terminus: Protein POLLEN DEFECTIVE IN GUIDANCE 1 (624 aa).

Residues 20 to 63 (SFENDDTSIRRSSSDPITGNVASESPRDYGKRKRSKKKKKKVNQ) form a disordered region. Positions 33–42 (SDPITGNVAS) are enriched in polar residues. The segment covering 49 to 61 (GKRKRSKKKKKKV) has biased composition (basic residues). The next 6 helical transmembrane spans lie at 263–283 (VLIDTGFFVCVNSFLSLLTVM), 305–325 (ASELSDLACFLVLATGTILLG), 391–411 (FVSDLALTMAASILHSFILLA), 413–433 (AITLSTCIVAHNNALLALLVS), 545–565 (LTFVPLAPACVVIRVLTPVYA), and 578–598 (LWMVILFVITYIMLTSLKVLI).

This sequence belongs to the TAPT1 family. In terms of assembly, interacts with CRT3, but not with CRT1 or CNX. As to expression, expressed in inflorescences, siliques, roots and shoots. Expressed in early embryo, endosperm, mature pollen and pollen tubes, synergide cells and weakly in antipodal cells.

The protein resides in the membrane. It localises to the endoplasmic reticulum lumen. Its function is as follows. Probable component of the calreticulin 3 (CRT3) complex, acting probably as a co-chaperone involved in protein retention in the endoplasmic reticulum lumen. Required for micropylar pollen tube guidance. Plays an essential role in cell plate orientation or positioning in early embryo patterning. In Arabidopsis thaliana (Mouse-ear cress), this protein is Protein POLLEN DEFECTIVE IN GUIDANCE 1 (POD1).